The following is a 117-amino-acid chain: Protein RALF-like 27 (117 aa).

Residues 1 to 27 (MTKTFFSFSFFFTSSLLLLLAATSATA) form the signal peptide. The propeptide at 28–71 (STGNVTSGLRYDGCAPGDTVGECITATVEEEDEEGVEAVVRRIL) is removed in mature form. Asn31 is a glycosylation site (N-linked (GlcNAc...) asparagine). Disulfide bonds link Cys88/Cys96 and Cys107/Cys113.

It belongs to the plant rapid alkalinization factor (RALF) family.

The protein localises to the secreted. Functionally, cell signaling peptide that may regulate plant stress, growth, and development. Mediates a rapid alkalinization of extracellular space by mediating a transient increase in the cytoplasmic Ca(2+) concentration leading to a calcium-dependent signaling events through a cell surface receptor and a concomitant activation of some intracellular mitogen-activated protein kinases. The chain is Protein RALF-like 27 (RALFL27) from Arabidopsis thaliana (Mouse-ear cress).